A 218-amino-acid polypeptide reads, in one-letter code: Peptide deformylase (218 aa).

Fe cation-binding residues include Cys-130 and His-172. Glu-173 is an active-site residue. His-176 lines the Fe cation pocket.

It belongs to the polypeptide deformylase family. It depends on Fe(2+) as a cofactor.

It catalyses the reaction N-terminal N-formyl-L-methionyl-[peptide] + H2O = N-terminal L-methionyl-[peptide] + formate. Its function is as follows. Removes the formyl group from the N-terminal Met of newly synthesized proteins. Requires at least a dipeptide for an efficient rate of reaction. N-terminal L-methionine is a prerequisite for activity but the enzyme has broad specificity at other positions. This chain is Peptide deformylase, found in Bifidobacterium adolescentis (strain ATCC 15703 / DSM 20083 / NCTC 11814 / E194a).